Here is a 315-residue protein sequence, read N- to C-terminus: B3 domain-containing protein At1g05920 (315 aa).

A disordered region spans residues 24 to 129; sequence MISRDNQKKT…PQVASVPKSV (106 aa). Composition is skewed to basic and acidic residues over residues 39-51, 66-83, and 100-114; these read VREE…EEMI, KEGK…DNRT, and FDHV…HAYL. The segment at residues 204 to 306 is a DNA-binding region (TF-B3); that stretch reads INTVIQNDFL…ILCFALVPPT (103 aa).

Its subcellular location is the nucleus. This chain is B3 domain-containing protein At1g05920, found in Arabidopsis thaliana (Mouse-ear cress).